The chain runs to 484 residues: 1,3-beta-glucanosyltransferase GAS5 (484 aa).

An N-terminal signal peptide occupies residues 1 to 19 (MLLRSLTSAFVLSAGLAQA). 2 N-linked (GlcNAc...) asparagine glycosylation sites follow: Asn24 and Asn60. A disulfide bond links Cys71 and Cys100. The (1,3-beta-D-glucosyl)n site is built by Tyr89, Asn159, and Glu160. Catalysis depends on Glu160, which acts as the Proton donor. N-linked (GlcNAc...) asparagine glycosylation is present at Asn166. Residues Asp201 and Arg206 each contribute to the (1,3-beta-D-glucosyl)n site. 2 disulfide bridges follow: Cys215–Cys348 and Cys234–Cys265. The active-site Nucleophile is Glu262. Tyr295 serves as a coordination point for (1,3-beta-D-glucosyl)n. Residues Asn299, Asn344, and Asn359 are each glycosylated (N-linked (GlcNAc...) asparagine). The tract at residues 383–462 (TGIATQQSCD…SSQSSSKSKG (80 aa)) is disordered. Over residues 394-404 (KDDDDEEDDDT) the composition is skewed to acidic residues. Low complexity predominate over residues 405 to 462 (SSSSSSSSSSSSSASSSSESSSSTSKASSSSPSASETSLLKSAASATSSSQSSSKSKG). The GPI-anchor amidated glycine moiety is linked to residue Gly462. A propeptide spans 463-484 (AAGIIEIPLIFRALAELYNLVL) (removed in mature form).

The protein belongs to the glycosyl hydrolase 72 family. In terms of processing, the GPI-anchor is attached to the protein in the endoplasmic reticulum and serves to target the protein to the cell surface. There, the glucosamine-inositol phospholipid moiety is cleaved off and the GPI-modified mannoprotein is covalently attached via its lipidless GPI glycan remnant to the 1,6-beta-glucan of the outer cell wall layer.

Its subcellular location is the secreted. The protein localises to the cell wall. It localises to the membrane. Its function is as follows. Splits internally a 1,3-beta-glucan molecule and transfers the newly generated reducing end (the donor) to the non-reducing end of another 1,3-beta-glucan molecule (the acceptor) forming a 1,3-beta linkage, resulting in the elongation of 1,3-beta-glucan chains in the cell wall. Involved in cell wall biosynthesis and morphogenesis. This Saccharomyces cerevisiae (strain ATCC 204508 / S288c) (Baker's yeast) protein is 1,3-beta-glucanosyltransferase GAS5 (GAS5).